The following is a 572-amino-acid chain: Proline--tRNA ligase (572 aa).

This sequence belongs to the class-II aminoacyl-tRNA synthetase family. ProS type 1 subfamily. In terms of assembly, homodimer.

It is found in the cytoplasm. The catalysed reaction is tRNA(Pro) + L-proline + ATP = L-prolyl-tRNA(Pro) + AMP + diphosphate. Catalyzes the attachment of proline to tRNA(Pro) in a two-step reaction: proline is first activated by ATP to form Pro-AMP and then transferred to the acceptor end of tRNA(Pro). As ProRS can inadvertently accommodate and process non-cognate amino acids such as alanine and cysteine, to avoid such errors it has two additional distinct editing activities against alanine. One activity is designated as 'pretransfer' editing and involves the tRNA(Pro)-independent hydrolysis of activated Ala-AMP. The other activity is designated 'posttransfer' editing and involves deacylation of mischarged Ala-tRNA(Pro). The misacylated Cys-tRNA(Pro) is not edited by ProRS. In Caldicellulosiruptor bescii (strain ATCC BAA-1888 / DSM 6725 / KCTC 15123 / Z-1320) (Anaerocellum thermophilum), this protein is Proline--tRNA ligase.